The sequence spans 404 residues: 11-beta-hydroxysteroid dehydrogenase type 2 (404 aa).

Residue 82–111 (TRAVLITGCDSGFGNATAKKLDTMGFTVLA) participates in NAD(+) binding. Residue Ser219 coordinates substrate. The active-site Proton acceptor is Tyr232. Positions 383–404 (LTSARDIAQDQGPRPDPSPTAQ) are disordered.

The protein belongs to the short-chain dehydrogenases/reductases (SDR) family. As to quaternary structure, interacts with ligand-free cytoplasmic NR3C2. In terms of tissue distribution, highly expressed in kidney, adrenal and colon; detected at lower levels on lung, liver, and spleen. Expressed in oocytes. Expressed in uterine tissues and in corpora lutea.

Its subcellular location is the microsome. It is found in the endoplasmic reticulum. It carries out the reaction an 11beta-hydroxysteroid + NAD(+) = an 11-oxosteroid + NADH + H(+). The catalysed reaction is corticosterone + NAD(+) = 11-dehydrocorticosterone + NADH + H(+). It catalyses the reaction cortisol + NAD(+) = cortisone + NADH + H(+). The enzyme catalyses 11beta,17beta-dihydroxyandrost-4-ene-3-one + NAD(+) = 17beta-hydroxyandrost-4-ene-3,11-dione + NADH + H(+). It carries out the reaction 11beta-hydroxyandrost-4-ene-3,17-dione + NAD(+) = androst-4-ene-3,11,17-trione + NADH + H(+). It functions in the pathway steroid metabolism. Inhibited by glycyrrhetinic acid, carbenoloxone, 11-alpha-OH-progesterone and 11-beta-OH-progesterone. In terms of biological role, catalyzes the conversion of biologically active 11beta-hydroxyglucocorticoids (11beta-hydroxysteroid) such as cortisol, to inactive 11-ketoglucocorticoids (11-oxosteroid) such as cortisone, in the presence of NAD(+). Functions as a dehydrogenase (oxidase), thereby decreasing the concentration of active glucocorticoids, thus protecting the nonselective mineralocorticoid receptor from occupation by glucocorticoids. Affinity towards corticosterone is higher than cortisol or dexamethasone. Plays an important role in maintaining glucocorticoids balance during preimplantation and protects the fetus from excessive maternal corticosterone exposure. Catalyzes the oxidation of 11beta-hydroxytestosterone (11beta,17beta-dihydroxyandrost-4-ene-3-one) to 11-ketotestosterone (17beta-hydroxyandrost-4-ene-3,11-dione), a major bioactive androgen. Catalyzes the conversion of 11beta-hydroxyandrostenedione (11beta-hydroxyandrost-4-ene-3,17-dione) to 11-ketoandrostenedione (androst-4-ene-3,11,17-trione), which can be further metabolized to 11-ketotestosterone. Converts 7-beta-25-dihydroxycholesterol to 7-oxo-25-hydroxycholesterol in vitro. 7-beta-25-dihydroxycholesterol (not 7-oxo-25-hydroxycholesterol) acts as ligand for the G-protein-coupled receptor (GPCR) Epstein-Barr virus-induced gene 2 (EBI2) and may thereby regulate immune cell migration. May protect ovulating oocytes and fertilizing spermatozoa from the adverse effects of cortisol. The chain is 11-beta-hydroxysteroid dehydrogenase type 2 (HSD11B2) from Bos taurus (Bovine).